Reading from the N-terminus, the 392-residue chain is PMA1 stabilization in the Golgi protein 1 (392 aa).

The N-terminal stretch at 1 to 22 is a signal peptide; the sequence is MRFHDSILIFFSLASLYQHVHG. O-linked (Man) threonine glycans are attached at residues threonine 34 and threonine 35. Serine 36 carries O-linked (Man) serine glycosylation. A glycan (O-linked (Man) threonine) is linked at threonine 45. A glycan (O-linked (Man) serine) is linked at serine 49. O-linked (Man) threonine glycans are attached at residues threonine 55, threonine 57, and threonine 63. O-linked (Man) serine glycosylation is present at serine 65. Residue threonine 71 is glycosylated (O-linked (Man) threonine). Serine 80 carries O-linked (Man) serine glycosylation. Residues threonine 89 and threonine 99 are each glycosylated (O-linked (Man) threonine). The O-linked (Man) serine glycan is linked to serine 107. Threonine 108 and threonine 112 each carry an O-linked (Man) threonine glycan. O-linked (Man) serine glycans are attached at residues serine 114 and serine 115. Threonine 117 is a glycosylation site (O-linked (Man) threonine). O-linked (Man) serine glycans are attached at residues serine 119 and serine 148. Threonine 156 carries an O-linked (Man) threonine glycan. The O-linked (Man) serine glycan is linked to serine 171. O-linked (Man) threonine glycosylation occurs at threonine 176. A glycan (O-linked (Man) serine) is linked at serine 181. Threonine 188, threonine 192, threonine 195, and threonine 199 each carry an O-linked (Man) threonine glycan. 2 O-linked (Man) serine glycosylation sites follow: serine 203 and serine 215. The Lumenal portion of the chain corresponds to 230-317; it reads DIPATFFSSE…DAGITNDQWY (88 aa). A helical transmembrane segment spans residues 318-338; it reads YVALSIPTVVVVFFVFMYFFL. Residues 339–392 lie on the Cytoplasmic side of the membrane; sequence YVNGKNRDFTDVTRKALNKKRRVLGKFSEMKKFKNMKNHKYTELPSYKKTSKQN.

In terms of assembly, interacts with EXP1. PSG1-N' interacts with ERAD-related proteins involved in PMA1 quality control including EPS1, CDC48, UBX2 and SSM4. PSG1-C' interacts with the TLG1/2 SNARE complex proteins TLG1, TLG2 and VTI1. In terms of processing, the precursor protein is cleaved into two polypeptide chains, PSG1-N' and PSG1-C'. The cleavage is performed in the Golgi apparatus by Ca(+)-dependent serine protease KEX2 between Arg-229 and Asp-230. Post-translationally, PSG1-N' is highly O-mannosylated.

It is found in the golgi apparatus lumen. The protein localises to the cytoplasmic vesicle. It localises to the COPI-coated vesicle membrane. With EXP1, the specific cargo receptor protein for the plasma membrane ATPase PMA1, is involved in the transport and/or maturation of PMA1. EXP1 and PSG1 probably act sequentially to promote PMA1 sorting between the ER and the Golgi, with EXP1 promoting PMA1 export from the ER to the Golgi while PSG1 has a role in PMA1 maturation or quality control in the Golgi. PSG1 might also couple PMA1 sorting and maturation in the early secretory pathway with the glycosylation machinery. Functionally, PSG1 is cleaved by KEX2 in two stable peptides, PSG1-N' and PSG1-C', the former supporting a role in maturation quality control, the latter having a role in modulating vesicular trafficking. This Saccharomyces cerevisiae (strain ATCC 204508 / S288c) (Baker's yeast) protein is PMA1 stabilization in the Golgi protein 1.